A 135-amino-acid chain; its full sequence is Ribonuclease P protein component (135 aa).

The protein belongs to the RnpA family. As to quaternary structure, consists of a catalytic RNA component (M1 or rnpB) and a protein subunit.

It carries out the reaction Endonucleolytic cleavage of RNA, removing 5'-extranucleotides from tRNA precursor.. Its function is as follows. RNaseP catalyzes the removal of the 5'-leader sequence from pre-tRNA to produce the mature 5'-terminus. It can also cleave other RNA substrates such as 4.5S RNA. The protein component plays an auxiliary but essential role in vivo by binding to the 5'-leader sequence and broadening the substrate specificity of the ribozyme. The protein is Ribonuclease P protein component of Pseudomonas paraeruginosa (strain DSM 24068 / PA7) (Pseudomonas aeruginosa (strain PA7)).